The sequence spans 433 residues: 23S rRNA (uracil(1939)-C(5))-methyltransferase RlmD (433 aa).

A TRAM domain is found at 10 to 68 (RTTTRQIITVSVNDLDSFGQGVARHNGKTLFIPGLLPQENAEVTVTEDKKQYARAKVVR). [4Fe-4S] cluster contacts are provided by C81, C87, C90, and C162. Positions 265, 294, 299, 315, 342, and 363 each coordinate S-adenosyl-L-methionine. The active-site Nucleophile is the C389.

This sequence belongs to the class I-like SAM-binding methyltransferase superfamily. RNA M5U methyltransferase family. RlmD subfamily.

It catalyses the reaction uridine(1939) in 23S rRNA + S-adenosyl-L-methionine = 5-methyluridine(1939) in 23S rRNA + S-adenosyl-L-homocysteine + H(+). In terms of biological role, catalyzes the formation of 5-methyl-uridine at position 1939 (m5U1939) in 23S rRNA. This chain is 23S rRNA (uracil(1939)-C(5))-methyltransferase RlmD, found in Escherichia coli O157:H7.